A 379-amino-acid polypeptide reads, in one-letter code: 1-deoxy-D-xylulose 5-phosphate reductoisomerase (379 aa).

Residues Thr-10, Gly-11, Ser-12, Ile-13, Asn-39, and Asn-121 each contribute to the NADPH site. 1-deoxy-D-xylulose 5-phosphate is bound at residue Lys-122. Glu-123 contributes to the NADPH binding site. Mn(2+) is bound at residue Asp-147. 4 residues coordinate 1-deoxy-D-xylulose 5-phosphate: Ser-148, Glu-149, Ser-173, and His-196. Glu-149 contacts Mn(2+). Gly-202 is a binding site for NADPH. 1-deoxy-D-xylulose 5-phosphate-binding residues include Ser-209, Asn-214, Lys-215, and Glu-218. Glu-218 contacts Mn(2+).

Belongs to the DXR family. The cofactor is Mg(2+). Mn(2+) serves as cofactor.

It catalyses the reaction 2-C-methyl-D-erythritol 4-phosphate + NADP(+) = 1-deoxy-D-xylulose 5-phosphate + NADPH + H(+). Its pathway is isoprenoid biosynthesis; isopentenyl diphosphate biosynthesis via DXP pathway; isopentenyl diphosphate from 1-deoxy-D-xylulose 5-phosphate: step 1/6. Catalyzes the NADPH-dependent rearrangement and reduction of 1-deoxy-D-xylulose-5-phosphate (DXP) to 2-C-methyl-D-erythritol 4-phosphate (MEP). This is 1-deoxy-D-xylulose 5-phosphate reductoisomerase from Chlamydia caviae (strain ATCC VR-813 / DSM 19441 / 03DC25 / GPIC) (Chlamydophila caviae).